Reading from the N-terminus, the 247-residue chain is MVPLDKDNQDICPICLDPLKEAVSTDCRHLFCRMCLIRHMDKASVSGVLSCPVCRKPCSETVLGDNYICHTHQKRVCRFCESSRHLLCEECLQSPEHRAHTELSIENAISHYKERLNRRSRKLRKDLGDLQRLKAQEEKMLQALQVDWGSHRPRTEQQNQDQTELQQKALPRHWLDQREDPPEEVAKVFNFSEAVTQLSILVSSLERMAKELDASTLKDASDLLDRSSQQKLEGLLSHVPPANSKLS.

Residues 12 to 55 (CPICLDPLKEAVSTDCRHLFCRMCLIRHMDKASVSGVLSCPVCR) form an RING-type zinc finger. A B box-type zinc finger spans residues 64 to 105 (GDNYICHTHQKRVCRFCESSRHLLCEECLQSPEHRAHTELSI). 4 residues coordinate Zn(2+): C69, H72, C91, and H97. Residues 111–148 (HYKERLNRRSRKLRKDLGDLQRLKAQEEKMLQALQVDW) are a coiled coil.

Belongs to the TRIM/RBCC family. Interacts with NEDD8.

The catalysed reaction is S-ubiquitinyl-[E2 ubiquitin-conjugating enzyme]-L-cysteine + [acceptor protein]-L-lysine = [E2 ubiquitin-conjugating enzyme]-L-cysteine + N(6)-ubiquitinyl-[acceptor protein]-L-lysine.. In terms of biological role, E3 ubiquitin-protein ligase that plays a role in the limitation of the innate immune response. Mediates inhibition of the RLR signaling pathway by ubiquitinating RIGI and IFIH1 receptors, leading to their proteasomal degradation. Also promotes the neddylation of IKBKG/NEMO, stabilizing NFKBIA, and thereby inhibiting of NF-kappa-B nuclear translocation and activation. In Rattus norvegicus (Rat), this protein is E3 ubiquitin ligase TRIM40 (Trim40).